A 467-amino-acid chain; its full sequence is Coiled-coil domain-containing protein 174 (467 aa).

2 disordered regions span residues 47-76 (INKK…LEEQ) and 129-163 (GATR…SEEW). Residues 64–76 (RAEKDAEQKLEEQ) show a composition bias toward basic and acidic residues. Positions 64–99 (RAEKDAEQKLEEQKTLDKAREKLEEKAKLYEKMTKG) form a coiled coil. Residues 136–147 (IEEERDDDDKEE) are compositionally biased toward acidic residues. A Phosphoserine modification is found at Ser198. Residues 268 to 310 (LEMLREQTTDQRIKRENIKEKRKAMLEARLAKLRQKKMKKSKE) are a coiled coil. Disordered regions lie at residues 301–365 (RQKK…IREW) and 379–454 (KQSE…VTFQ). Basic and acidic residues-rich tracts occupy residues 349-365 (IQER…IREW) and 379-390 (KQSELRAERDPE). Residues 406-415 (PMSSQPQSRP) show a composition bias toward polar residues. Residues 423-446 (GHSSGQSQEPSSSHTSTPASESSP) show a composition bias toward low complexity.

It localises to the nucleus. In terms of biological role, probably involved in neuronal development. The polypeptide is Coiled-coil domain-containing protein 174 (Ccdc174) (Mus musculus (Mouse)).